The chain runs to 105 residues: ATP synthase F(0) complex subunit a (105 aa).

The next 3 helical transmembrane spans lie at 14-34 (EGTP…SLFI), 47-67 (LTAG…LLPM), and 72-92 (AILT…VAMI).

It belongs to the ATPase A chain family. As to quaternary structure, component of the ATP synthase complex composed at least of ATP5F1A/subunit alpha, ATP5F1B/subunit beta, ATP5MC1/subunit c (homooctomer), MT-ATP6/subunit a, MT-ATP8/subunit 8, ATP5ME/subunit e, ATP5MF/subunit f, ATP5MG/subunit g, ATP5MK/subunit k, ATP5MJ/subunit j, ATP5F1C/subunit gamma, ATP5F1D/subunit delta, ATP5F1E/subunit epsilon, ATP5PF/subunit F6, ATP5PB/subunit b, ATP5PD/subunit d, ATP5PO/subunit OSCP. ATP synthase complex consists of a soluble F(1) head domain (subunits alpha(3) and beta(3)) - the catalytic core - and a membrane F(0) domain - the membrane proton channel (subunits c, a, 8, e, f, g, k and j). These two domains are linked by a central stalk (subunits gamma, delta, and epsilon) rotating inside the F1 region and a stationary peripheral stalk (subunits F6, b, d, and OSCP). Interacts with DNAJC30; interaction is direct.

The protein localises to the mitochondrion inner membrane. It catalyses the reaction H(+)(in) = H(+)(out). In terms of biological role, subunit a, of the mitochondrial membrane ATP synthase complex (F(1)F(0) ATP synthase or Complex V) that produces ATP from ADP in the presence of a proton gradient across the membrane which is generated by electron transport complexes of the respiratory chain. ATP synthase complex consist of a soluble F(1) head domain - the catalytic core - and a membrane F(1) domain - the membrane proton channel. These two domains are linked by a central stalk rotating inside the F(1) region and a stationary peripheral stalk. During catalysis, ATP synthesis in the catalytic domain of F(1) is coupled via a rotary mechanism of the central stalk subunits to proton translocation. With the subunit c (ATP5MC1), forms the proton-conducting channel in the F(0) domain, that contains two crucial half-channels (inlet and outlet) that facilitate proton movement from the mitochondrial intermembrane space (IMS) into the matrix. Protons are taken up via the inlet half-channel and released through the outlet half-channel, following a Grotthuss mechanism. This is ATP synthase F(0) complex subunit a from Salmo trutta (Brown trout).